Consider the following 283-residue polypeptide: Bifunctional protein FolD (283 aa).

NADP(+) contacts are provided by residues 165-167 and Ser190; that span reads GAS.

It belongs to the tetrahydrofolate dehydrogenase/cyclohydrolase family. As to quaternary structure, homodimer.

It carries out the reaction (6R)-5,10-methylene-5,6,7,8-tetrahydrofolate + NADP(+) = (6R)-5,10-methenyltetrahydrofolate + NADPH. The catalysed reaction is (6R)-5,10-methenyltetrahydrofolate + H2O = (6R)-10-formyltetrahydrofolate + H(+). It participates in one-carbon metabolism; tetrahydrofolate interconversion. In terms of biological role, catalyzes the oxidation of 5,10-methylenetetrahydrofolate to 5,10-methenyltetrahydrofolate and then the hydrolysis of 5,10-methenyltetrahydrofolate to 10-formyltetrahydrofolate. The polypeptide is Bifunctional protein FolD (Cupriavidus necator (strain ATCC 17699 / DSM 428 / KCTC 22496 / NCIMB 10442 / H16 / Stanier 337) (Ralstonia eutropha)).